A 515-amino-acid polypeptide reads, in one-letter code: Spermatogenesis-associated protein 2 (515 aa).

Residues 78 to 150 (ALHCAFSMLE…VYKLKELVES (73 aa)) form the PUB domain. A PIM motif motif is present at residues 321 to 338 (TYFSTQDDVDLYTDSEPR). Positions 429 to 452 (GHQTQGLDRLAPVHSKPKPSTTAT) are disordered.

Belongs to the SPATA2 family. In terms of assembly, interacts (via the PIM motif) with RNF31/HOIP (via the PUB domain); the interaction is direct. Interacts (via the PUB domain) with CYLD; the interaction is direct. In terms of tissue distribution, widely expressed, with highest expression in testis, lung and intestine, and lower expression in brain, heart and spleen. Present at high level in Sertoli cells: expressed from stage I to stage XII of the testis seminiferous epithelium (at protein level).

It localises to the cytoplasm. The protein localises to the nucleus. In terms of biological role, bridging factor that mediates the recruitment of CYLD to the LUBAC complex, thereby regulating TNF-alpha-induced necroptosis. Acts as a direct binding intermediate that bridges RNF31/HOIP, the catalytic subunit of the LUBAC complex, and the deubiquitinase (CYLD), thereby recruiting CYLD to the TNF-R1 signaling complex (TNF-RSC). Required to activate the 'Met-1'- (linear) and 'Lys-63'-linked deubiquitinase activities of CYLD. Controls the kinase activity of RIPK1 and TNF-alpha-induced necroptosis by promoting 'Met-1'-linked deubiquitination of RIPK1 by CYLD. The chain is Spermatogenesis-associated protein 2 from Mus musculus (Mouse).